Reading from the N-terminus, the 212-residue chain is HTH-type transcriptional regulator RutR (212 aa).

The region spanning 17 to 77 (SAKKKAILSA…AVLRQILDIW (61 aa)) is the HTH tetR-type domain. Residues 39–58 (TRLEQIAELAGVSKTNLLYY) constitute a DNA-binding region (H-T-H motif).

As to quaternary structure, homodimer.

In terms of biological role, master transcription regulator which represses the degradation of pyrimidines (rutABCDEFG) and purines (gcl operon) for maintenance of metabolic balance between pyrimidines and purines. It also regulates the synthesis of pyrimidine nucleotides and arginine from glutamine (carAB) and the supply of glutamate (gadABWX). In Escherichia coli O6:H1 (strain CFT073 / ATCC 700928 / UPEC), this protein is HTH-type transcriptional regulator RutR (rutR).